The sequence spans 132 residues: MVMTDPIADFLTRIRNANQAKHEVLEVPASNIKKGIAEILKREGFVKNVEIIEDDKQGVIRVFLKYGPNGEKVITNLKRVSKPGLRVYKKREDLPKVLNGLGIAILSTSEGLLTDKEARQKNVGGEVIAYVW.

The protein belongs to the universal ribosomal protein uS8 family. In terms of assembly, part of the 30S ribosomal subunit. Contacts proteins S5 and S12.

Functionally, one of the primary rRNA binding proteins, it binds directly to 16S rRNA central domain where it helps coordinate assembly of the platform of the 30S subunit. The sequence is that of Small ribosomal subunit protein uS8 from Streptococcus pneumoniae (strain Taiwan19F-14).